Here is a 428-residue protein sequence, read N- to C-terminus: Glutamate-1-semialdehyde 2,1-aminomutase (428 aa).

Residue lysine 265 is modified to N6-(pyridoxal phosphate)lysine.

This sequence belongs to the class-III pyridoxal-phosphate-dependent aminotransferase family. HemL subfamily. In terms of assembly, homodimer. The cofactor is pyridoxal 5'-phosphate.

The protein localises to the cytoplasm. The catalysed reaction is (S)-4-amino-5-oxopentanoate = 5-aminolevulinate. The protein operates within porphyrin-containing compound metabolism; protoporphyrin-IX biosynthesis; 5-aminolevulinate from L-glutamyl-tRNA(Glu): step 2/2. This chain is Glutamate-1-semialdehyde 2,1-aminomutase, found in Legionella pneumophila (strain Paris).